The following is a 445-amino-acid chain: Guanosine nucleotide diphosphate dissociation inhibitor 1 (445 aa).

This sequence belongs to the Rab GDI family. Interacts with the GDP-bound form of RABA5C (via C-terminus). Expressed in roots, rosette leaves, stems, floral buds and siliques.

In terms of biological role, regulates the GDP/GTP exchange reaction of most RAB proteins by inhibiting the dissociation of GDP from them, and the subsequent binding of GTP. This is Guanosine nucleotide diphosphate dissociation inhibitor 1 (GDI1) from Arabidopsis thaliana (Mouse-ear cress).